A 532-amino-acid polypeptide reads, in one-letter code: Fatty aldehyde dehydrogenase HFD1 (532 aa).

At Ser111 the chain carries Phosphoserine. Residues Ile134–Ala152 form a helical membrane-spanning segment. Gly214–Gly219 provides a ligand contact to NAD(+). Catalysis depends on residues Glu236 and Cys273.

It belongs to the aldehyde dehydrogenase family.

It is found in the lipid droplet. It localises to the mitochondrion outer membrane. The protein resides in the endosome membrane. The protein localises to the cytoplasmic granule membrane. It carries out the reaction an aldehyde + NAD(+) + H2O = a carboxylate + NADH + 2 H(+). It catalyses the reaction hexadecanoate + NADH + 2 H(+) = hexadecanal + NAD(+) + H2O. The enzyme catalyses 4-hydroxybenzaldehyde + NAD(+) + H2O = 4-hydroxybenzoate + NADH + 2 H(+). Catalyzes the oxidation of long-chain aliphatic aldehydes to fatty acids. Responsible for conversion of the sphingosine 1-phosphate (S1P) degradation product hexadecenal to hexadecenoic acid. Involved in coenzyme Q (CoQ) biosynthesis, catalyzing the last step in the tyrosine to 4-hydroxybenzoate (4-HB) pathway. Oxidizes 4-hydroxybenzaldehyde (4-Hbz) to 4-HB, the aromatic precursor for coenzyme Q. This chain is Fatty aldehyde dehydrogenase HFD1 (HFD1), found in Saccharomyces cerevisiae (strain ATCC 204508 / S288c) (Baker's yeast).